Reading from the N-terminus, the 218-residue chain is Akirin (218 aa).

The disordered stretch occupies residues 96–150 (KAIPRSNDFDDDGDQRGDGCSSNYSKAYRAPSSPKSGSDSEGEAPSTSVTDRSSA). Positions 128–147 (SPKSGSDSEGEAPSTSVTDR) are enriched in polar residues.

The protein belongs to the akirin family. Interacts with hda-1, a component of the NuRD complex. Interacts with let-418, a component of the NuRD and MEC complexes. Interacts with the transcription factor ceh-18. Interacts with ima-2. In terms of tissue distribution, localizes to somatic tissues throughout the body, including muscle cells. Expressed in lateral epithelial seam cells, the hyp7 epidermal syncytium, and multiple head and tail neurons.

The protein localises to the nucleus. In terms of biological role, molecular adapter that acts as a bridge between a variety of multiprotein complexes, and which is involved in antifungal innate immunity, development of the muscle and sister chromatid cohesion. Plays a role in antifungal innate immunity by acting as a bridge between components of the NuRD (Nucleosome Remodeling and Deacetylase) and MEC chromatin remodeling complexes. NuRD and MEC complexes bind to the promoters of antimicrobial peptide genes and may recruit other proteins such as ceh-18 to control gene expression in response to fungal infection. During meiotic prophase I, plays a role in the disassembly of synaptonemal complex proteins and in the regulation of chromosome condensation and segregation. Together with nuclear import receptor ima-2, required for the import and load of cohesin complex proteins in meiotic nuclei, possibly by acting as a bridge between ima-2 and cohesins. Required for embryonic development of muscle tissue. The protein is Akirin of Caenorhabditis elegans.